A 255-amino-acid chain; its full sequence is Imidazole glycerol phosphate synthase subunit HisF (255 aa).

Residues Asp-11 and Asp-130 contribute to the active site.

This sequence belongs to the HisA/HisF family. As to quaternary structure, heterodimer of HisH and HisF.

The protein localises to the cytoplasm. It carries out the reaction 5-[(5-phospho-1-deoxy-D-ribulos-1-ylimino)methylamino]-1-(5-phospho-beta-D-ribosyl)imidazole-4-carboxamide + L-glutamine = D-erythro-1-(imidazol-4-yl)glycerol 3-phosphate + 5-amino-1-(5-phospho-beta-D-ribosyl)imidazole-4-carboxamide + L-glutamate + H(+). It participates in amino-acid biosynthesis; L-histidine biosynthesis; L-histidine from 5-phospho-alpha-D-ribose 1-diphosphate: step 5/9. In terms of biological role, IGPS catalyzes the conversion of PRFAR and glutamine to IGP, AICAR and glutamate. The HisF subunit catalyzes the cyclization activity that produces IGP and AICAR from PRFAR using the ammonia provided by the HisH subunit. This chain is Imidazole glycerol phosphate synthase subunit HisF, found in Exiguobacterium sp. (strain ATCC BAA-1283 / AT1b).